The chain runs to 603 residues: NADH-ubiquinone oxidoreductase chain 5 (603 aa).

15 helical membrane-spanning segments follow: residues 4 to 24, 35 to 55, 84 to 104, 121 to 141, 177 to 197, 213 to 233, 241 to 261, 273 to 293, 301 to 320, 325 to 347, 366 to 386, 413 to 433, 457 to 477, 480 to 500, and 583 to 603; these read ISTLTLASLIILTLPITTTLL, ITKTAVTYAFVISLIPTLLFV, FFSLTFMPIALFITWSIMEFS, LLLFLITMLILVSANNLLQLF, IGDMGFIMMMAWFIIHLNSWE, LLGLLLASTGKSAQFGLHPWL, TPVSALLHSSTMVMAGVFTLI, VQTSTLCLGAITTLFTAICAL, IIALSTSSQLGLMMVTIGIN, AFTHMCTHAFFKAMLFLSSGSII, MPITSTAIIIGSLALTGMPFL, LIAVSMTASYSTRIIFFALLG, LILGSIFMGFFISMNTIPHTT, MTMPPHLKFMALAVTLLGFTV, and LMKLYFLSFLLSITLGLLIAL.

The protein belongs to the complex I subunit 5 family. In terms of assembly, core subunit of respiratory chain NADH dehydrogenase (Complex I) which is composed of 45 different subunits.

The protein localises to the mitochondrion inner membrane. The catalysed reaction is a ubiquinone + NADH + 5 H(+)(in) = a ubiquinol + NAD(+) + 4 H(+)(out). Its function is as follows. Core subunit of the mitochondrial membrane respiratory chain NADH dehydrogenase (Complex I) which catalyzes electron transfer from NADH through the respiratory chain, using ubiquinone as an electron acceptor. Essential for the catalytic activity and assembly of complex I. This Mammuthus primigenius (Siberian woolly mammoth) protein is NADH-ubiquinone oxidoreductase chain 5 (MT-ND5).